The primary structure comprises 144 residues: D-aminoacyl-tRNA deacylase (144 aa).

The Gly-cisPro motif, important for rejection of L-amino acids signature appears at 136–137; it reads GP.

Belongs to the DTD family. As to quaternary structure, homodimer.

The protein localises to the cytoplasm. It carries out the reaction glycyl-tRNA(Ala) + H2O = tRNA(Ala) + glycine + H(+). The catalysed reaction is a D-aminoacyl-tRNA + H2O = a tRNA + a D-alpha-amino acid + H(+). Its function is as follows. An aminoacyl-tRNA editing enzyme that deacylates mischarged D-aminoacyl-tRNAs. Also deacylates mischarged glycyl-tRNA(Ala), protecting cells against glycine mischarging by AlaRS. Acts via tRNA-based rather than protein-based catalysis; rejects L-amino acids rather than detecting D-amino acids in the active site. By recycling D-aminoacyl-tRNA to D-amino acids and free tRNA molecules, this enzyme counteracts the toxicity associated with the formation of D-aminoacyl-tRNA entities in vivo and helps enforce protein L-homochirality. This is D-aminoacyl-tRNA deacylase from Aliivibrio salmonicida (strain LFI1238) (Vibrio salmonicida (strain LFI1238)).